The sequence spans 124 residues: MaFF-interacting protein (124 aa).

The stretch at 54–96 (LVSEVEELYKSITALREKLLQAEQSLRNLKDIHMSLEKDVTAM) forms a coiled coil.

This sequence belongs to the tektin family. As to quaternary structure, interacts with MIS18A. Interacts (via its coiled-coil region) with MAFF. Strongly expressed in brain, kidney and ovary. Moderately expressed in liver, spleen, thymus, prostate, testis, small intestine and colon. Weakly expressed in heart, placenta, lung and leukocytes.

It is found in the cytoplasm. The protein resides in the nucleus. Its subcellular location is the nucleolus. Its function is as follows. Acts as a coactivator of MAFF transcriptional activity. Inhibits cell growth and colony-forming efficiency. The protein is MaFF-interacting protein (MAFIP) of Homo sapiens (Human).